The following is a 105-amino-acid chain: Large ribosomal subunit protein mL49 (105 aa).

Residues 1–15 constitute a mitochondrion transit peptide; sequence MRSSLKPVLSNLRFN.

Belongs to the mitochondrion-specific ribosomal protein mL49 family. Component of the mitochondrial large ribosomal subunit (mt-LSU). Mature yeast 74S mitochondrial ribosomes consist of a small (37S) and a large (54S) subunit. The 37S small subunit contains a 15S ribosomal RNA (15S mt-rRNA) and at least 32 different proteins. The 54S large subunit contains a 21S rRNA (21S mt-rRNA) and at least 45 different proteins.

It is found in the mitochondrion. Its function is as follows. Component of the mitochondrial ribosome (mitoribosome), a dedicated translation machinery responsible for the synthesis of mitochondrial genome-encoded proteins, including at least some of the essential transmembrane subunits of the mitochondrial respiratory chain. The mitoribosomes are attached to the mitochondrial inner membrane and translation products are cotranslationally integrated into the membrane. This is Large ribosomal subunit protein mL49 (img2) from Schizosaccharomyces pombe (strain 972 / ATCC 24843) (Fission yeast).